A 91-amino-acid polypeptide reads, in one-letter code: Acylphosphatase (91 aa).

One can recognise an Acylphosphatase-like domain in the interval 3–91; sequence TVTMKVTGLV…EKFTRFSVVY (89 aa). Catalysis depends on residues R18 and N36.

The protein belongs to the acylphosphatase family.

The catalysed reaction is an acyl phosphate + H2O = a carboxylate + phosphate + H(+). The polypeptide is Acylphosphatase (acyP) (Lactobacillus gasseri (strain ATCC 33323 / DSM 20243 / BCRC 14619 / CIP 102991 / JCM 1131 / KCTC 3163 / NCIMB 11718 / NCTC 13722 / AM63)).